Here is a 390-residue protein sequence, read N- to C-terminus: Protein TAB2 homolog, chloroplastic (390 aa).

The transit peptide at Met1 to Glu69 directs the protein to the chloroplast. Residues Arg16 to Asn85 are disordered. Residues Ser61–Asp75 are compositionally biased toward low complexity.

Its subcellular location is the plastid. It localises to the chloroplast. In terms of biological role, nuclear genome-encoded factor involved in the biogenesis of photosystem I (PSI). Required for the accumulation of PSI during plant development. Does not seem to be required for the translation of mRNAs of the PSI subunits. This is Protein TAB2 homolog, chloroplastic from Zea mays (Maize).